We begin with the raw amino-acid sequence, 293 residues long: Ribosomal protein L11 methyltransferase (293 aa).

Thr145, Gly166, Asp188, and Asn230 together coordinate S-adenosyl-L-methionine.

The protein belongs to the methyltransferase superfamily. PrmA family.

It localises to the cytoplasm. The enzyme catalyses L-lysyl-[protein] + 3 S-adenosyl-L-methionine = N(6),N(6),N(6)-trimethyl-L-lysyl-[protein] + 3 S-adenosyl-L-homocysteine + 3 H(+). Methylates ribosomal protein L11. The chain is Ribosomal protein L11 methyltransferase from Escherichia coli O81 (strain ED1a).